A 141-amino-acid chain; its full sequence is Hemoglobin subunit alpha (141 aa).

The region spanning 1–141 is the Globin domain; sequence VLSPTDKTNV…VSTVLTSKYR (141 aa). The residue at position 3 (Ser3) is a Phosphoserine. N6-succinyllysine is present on Lys7. Thr8 carries the post-translational modification Phosphothreonine. The residue at position 11 (Lys11) is an N6-succinyllysine. Tyr24 is modified (phosphotyrosine). The residue at position 35 (Ser35) is a Phosphoserine. Lys40 carries the post-translational modification N6-succinyllysine. Ser49 is modified (phosphoserine). His58 provides a ligand contact to O2. His87 is a heme b binding site. Position 102 is a phosphoserine (Ser102). Thr108 is subject to Phosphothreonine. A Phosphoserine modification is found at Ser124. Residues Thr134 and Thr137 each carry the phosphothreonine modification. Residue Ser138 is modified to Phosphoserine.

It belongs to the globin family. Heterotetramer of two alpha chains and two beta chains. In terms of tissue distribution, red blood cells.

Involved in oxygen transport from the lung to the various peripheral tissues. Its function is as follows. Hemopressin acts as an antagonist peptide of the cannabinoid receptor CNR1. Hemopressin-binding efficiently blocks cannabinoid receptor CNR1 and subsequent signaling. The polypeptide is Hemoglobin subunit alpha (HBA) (Rhinoceros unicornis (Greater Indian rhinoceros)).